The following is a 221-amino-acid chain: Anti-sigma-W factor RsiW (221 aa).

Residues 1–87 (MKTCHSHDEL…AKWKLKAKRH (87 aa)) lie on the Cytoplasmic side of the membrane. Residues histidine 30, cysteine 34, and cysteine 37 each contribute to the Zn(2+) site. Residues 88–108 (PILVAAAIFLIMMSAAFFSAW) form a helical membrane-spanning segment. Residues 109–221 (SHTTDGIAVS…GEDDPHSTDN (113 aa)) lie on the Extracellular side of the membrane.

It belongs to the zinc-associated anti-sigma factor (ZAS) superfamily. Anti-sigma-W factor family. Requires Zn(2+) as cofactor. Post-translationally, is processed by three successive proteolytic events. First, the extracellular region of RsiW is cleaved by PrsW (Site-1 cleavage) in response to cell envelope stresses. Next, it undergoes cleavage at an intramembrane site (Site-2 cleavage) mediated by RasP. This cleavage uncovers a cryptic proteolytic tag with conserved alanine residues in the transmembrane segment, that is recognized mainly by the ClpXP protease, which completely degrades the protein in the cytoplasm and leads to the induction of the sigma-W-controlled genes.

It localises to the membrane. Functionally, is the anti-sigma factor for SigW. The presence of RsiW leads to the inactivation of SigW, and its proteolytic destruction to sigma-W activation. This Shouchella clausii (strain KSM-K16) (Alkalihalobacillus clausii) protein is Anti-sigma-W factor RsiW (rsiW).